The primary structure comprises 554 residues: Arginine--tRNA ligase (554 aa).

A 'HIGH' region motif is present at residues 132–142; the sequence is ANPTGPIHLGG.

The protein belongs to the class-I aminoacyl-tRNA synthetase family. Monomer.

It is found in the cytoplasm. The catalysed reaction is tRNA(Arg) + L-arginine + ATP = L-arginyl-tRNA(Arg) + AMP + diphosphate. The polypeptide is Arginine--tRNA ligase (Kineococcus radiotolerans (strain ATCC BAA-149 / DSM 14245 / SRS30216)).